The chain runs to 688 residues: MPNHQSGSPTGSSDLLLDGKKQRAHLALRRKRRREMRKINRKVRRMNLAPIKEKTAWQHLQALIFEAEEVLKTSQTPQTSLTLFLALLSVLGPPPVSGESYWAYLPKPPILHPVGWGNTDPIRVLTNQTIYLGGSPDFHGFRNMSGNVHFEEKSDTLPICFSFSFSTPTGCFQVDKQVFLSDTPTVDNNKPGGKGDKRRMWELWLTTLGNSGANTKLVPIKKKLPPKYPHCQIAFKKDAFWEGDESAPPRWLPCAFPDQGVSFSPKGALGLLWDFSLPSPSVDQSDQIKSKKDLFGNYTPPVNKEVHRWYEAGWVEPTWFWENSPKDPNDRDFTALVPHTELFRLVAASRYLILKRPGFQEHEMIPTSACVTYPYVILLGLPQLIDIEKRGSTFHISCSSCRLTNCLDSSAYDYAAIIVKRPPYVLLPVDIGDEPWFDDSAIQTFRYATDLIRAKRFVAAIILGISALIAIITSFAVATTALVKEMQTATFVNNLHRNVTLALSEQRIIDLKLEARLNALEEVVLDLGQDVANLKTRMSTRCHANYDFICVTPLPYNASESWERTKAHLLGIWNDNEISYNIQELTNLIGDMSKQHIDTVDLSGLAQSFANGVKALNPLDWTQYFIFIGVGALLLVIVLMIFPIVFQCLAKSLDQVQSDLNVLLLKKKKGGNAAPAAEMVELPRVSYT.

Residues 1-98 form the signal peptide; sequence MPNHQSGSPT…SVLGPPPVSG (98 aa). Residues 99-624 are Extracellular-facing; sequence ESYWAYLPKP…ALNPLDWTQY (526 aa). N127 and N143 each carry an N-linked (GlcNAc...) asparagine; by host glycan. The stretch at 426–474 forms a coiled coil; sequence LLPVDIGDEPWFDDSAIQTFRYATDLIRAKRFVAAIILGISALIAIITS. A propeptide spanning residues 455–456 is cleaved from the precursor; it reads KR. The tract at residues 457–477 is fusion peptide; the sequence is FVAAIILGISALIAIITSFAV. The immunosuppression stretch occupies residues 463–481; it reads LGISALIAIITSFAVATTA. Residue N498 is glycosylated (N-linked (GlcNAc...) asparagine; by host). A coiled-coil region spans residues 511–541; the sequence is LKLEARLNALEEVVLDLGQDVANLKTRMSTR. N-linked (GlcNAc...) asparagine; by host glycosylation is present at N557. Residues 625–645 form a helical membrane-spanning segment; the sequence is FIFIGVGALLLVIVLMIFPIV. Topologically, residues 646-688 are cytoplasmic; sequence FQCLAKSLDQVQSDLNVLLLKKKKGGNAAPAAEMVELPRVSYT.

In terms of assembly, the mature envelope protein (Env) consists of a trimer of SU-TM heterodimers attached by non-covalent interactions or by a labile interchain disulfide bond. In terms of processing, specific enzymatic cleavages in vivo yield mature proteins. Envelope glycoproteins are synthesized as an inactive precursor that is N-glycosylated and processed likely by host cell furin or by a furin-like protease in the Golgi to yield the mature SU and TM proteins. The cleavage site between SU and TM requires the minimal sequence [KR]-X-[KR]-R.

It is found in the virion membrane. The protein resides in the host cell membrane. Its function is as follows. The surface protein (SU) attaches the virus to the host cell by binding to its receptor. This interaction triggers the refolding of the transmembrane protein (TM) and is thought to activate its fusogenic potential by unmasking its fusion peptide. Fusion occurs at the host cell plasma membrane. Functionally, the transmembrane protein (TM) acts as a class I viral fusion protein. Under the current model, the protein has at least 3 conformational states: pre-fusion native state, pre-hairpin intermediate state, and post-fusion hairpin state. During viral and target cell membrane fusion, the coiled coil regions (heptad repeats) assume a trimer-of-hairpins structure, positioning the fusion peptide in close proximity to the C-terminal region of the ectodomain. The formation of this structure appears to drive apposition and subsequent fusion of viral and target cell membranes. Membranes fusion leads to delivery of the nucleocapsid into the cytoplasm. The protein is Envelope glycoprotein gp70 (env) of Mouse mammary tumor virus (strain C3H) (MMTV).